Consider the following 823-residue polypeptide: ATM interactor (823 aa).

The segment at 28-67 (GAAAAASGPWVPPGPRLRGSRPRPAGATQQPAVPAPPAGE) is disordered. Low complexity predominate over residues 49–59 (PRPAGATQQPA). The C2H2-type 1 zinc-finger motif lies at 84-109 (ILCTVRGCGKILPNSPALNMHLVKSH). The C2H2-type 2; degenerate zinc finger occupies 165–184 (HKCSKCSNSYGTEWDLKRHA). Residues 214-225 (HEIPAEHRDPPS) are compositionally biased toward basic and acidic residues. 3 disordered regions span residues 214-234 (HEIP…ENCA), 268-289 (EPSF…TPPR), and 610-634 (RSLL…NPGI). Residues 223–442 (PPSKKRKMEN…ADSSVSSCSQ (220 aa)) form a required for formation of RAD51 foci region. 2 stretches are compositionally biased toward polar residues: residues 275 to 286 (CGSNTDKQTLTT) and 613 to 629 (LSDT…SGPA).

As to quaternary structure, interacts via its C-terminus with ATM. Interacts with DYNLL1; this interaction inhibits ATMIN transcriptional activity and hence may play a role in a feedback loop whereby DYNLL1 inhibits transactivation of its own promoter by ATMIN. In terms of tissue distribution, ubiquitously expressed in normal tissues and cancer cell lines with highest levels in placenta and skeletal muscle.

The protein resides in the nucleus. Transcription factor. Plays a crucial role in cell survival and RAD51 foci formation in response to methylating DNA damage. Involved in regulating the activity of ATM in the absence of DNA damage. May play a role in stabilizing ATM. Binds to the DYNLL1 promoter and activates its transcription. In Homo sapiens (Human), this protein is ATM interactor (ATMIN).